The following is a 290-amino-acid chain: Lipoyl synthase (290 aa).

[4Fe-4S] cluster-binding residues include Cys32, Cys37, Cys43, Cys58, Cys62, Cys65, and Ser272. The region spanning Trp44–Lys261 is the Radical SAM core domain.

It belongs to the radical SAM superfamily. Lipoyl synthase family. It depends on [4Fe-4S] cluster as a cofactor.

The protein localises to the cytoplasm. It catalyses the reaction [[Fe-S] cluster scaffold protein carrying a second [4Fe-4S](2+) cluster] + N(6)-octanoyl-L-lysyl-[protein] + 2 oxidized [2Fe-2S]-[ferredoxin] + 2 S-adenosyl-L-methionine + 4 H(+) = [[Fe-S] cluster scaffold protein] + N(6)-[(R)-dihydrolipoyl]-L-lysyl-[protein] + 4 Fe(3+) + 2 hydrogen sulfide + 2 5'-deoxyadenosine + 2 L-methionine + 2 reduced [2Fe-2S]-[ferredoxin]. It functions in the pathway protein modification; protein lipoylation via endogenous pathway; protein N(6)-(lipoyl)lysine from octanoyl-[acyl-carrier-protein]: step 2/2. Functionally, catalyzes the radical-mediated insertion of two sulfur atoms into the C-6 and C-8 positions of the octanoyl moiety bound to the lipoyl domains of lipoate-dependent enzymes, thereby converting the octanoylated domains into lipoylated derivatives. The sequence is that of Lipoyl synthase from Pyrobaculum aerophilum (strain ATCC 51768 / DSM 7523 / JCM 9630 / CIP 104966 / NBRC 100827 / IM2).